Reading from the N-terminus, the 631-residue chain is Transmembrane and coiled-coil domain-containing protein 4 (631 aa).

The tract at residues Met-1–Pro-26 is disordered. Residues Glu-153 to Lys-183 adopt a coiled-coil conformation. 4 consecutive transmembrane segments (helical) span residues Tyr-187–Val-203, Thr-204–Ile-220, Leu-228–Leu-248, and Leu-343–Ile-363. The interval Trp-523–Asp-631 is disordered. Over residues Ile-571–Asp-590 the composition is skewed to polar residues.

The protein belongs to the TMCO4 family.

Its subcellular location is the membrane. This chain is Transmembrane and coiled-coil domain-containing protein 4 (Tmco4), found in Rattus norvegicus (Rat).